A 115-amino-acid chain; its full sequence is Nitrogenase-stabilizing/protective protein NifW (115 aa).

The protein belongs to the NifW family. In terms of assembly, homotrimer; associates with NifD.

Its function is as follows. May protect the nitrogenase Fe-Mo protein from oxidative damage. The sequence is that of Nitrogenase-stabilizing/protective protein NifW from Stutzerimonas stutzeri (strain A1501) (Pseudomonas stutzeri).